The following is a 126-amino-acid chain: Aspartate 1-decarboxylase (126 aa).

The active-site Schiff-base intermediate with substrate; via pyruvic acid is Ser25. Ser25 bears the Pyruvic acid (Ser) mark. Position 57 (Thr57) interacts with substrate. Tyr58 (proton donor) is an active-site residue. 72-74 provides a ligand contact to substrate; the sequence is GAT.

Belongs to the PanD family. As to quaternary structure, heterooctamer of four alpha and four beta subunits. The cofactor is pyruvate. In terms of processing, is synthesized initially as an inactive proenzyme, which is activated by self-cleavage at a specific serine bond to produce a beta-subunit with a hydroxyl group at its C-terminus and an alpha-subunit with a pyruvoyl group at its N-terminus.

It localises to the cytoplasm. It carries out the reaction L-aspartate + H(+) = beta-alanine + CO2. The protein operates within cofactor biosynthesis; (R)-pantothenate biosynthesis; beta-alanine from L-aspartate: step 1/1. Its function is as follows. Catalyzes the pyruvoyl-dependent decarboxylation of aspartate to produce beta-alanine. The protein is Aspartate 1-decarboxylase of Campylobacter jejuni subsp. doylei (strain ATCC BAA-1458 / RM4099 / 269.97).